Here is a 221-residue protein sequence, read N- to C-terminus: MVSFSTLLTACTAITGALGTPDLDRRQNVTPNAQGTHNGYFYSWWSDGQSPVTYTNSAGGSYSVEWSSGGNLVGGKGWNPGSAKEIRYSASWQPTNNSNSYLTIYGWTRSPLVEYYIVESHGEYNPGSSAEPRGEIEAHGSIYKLYESTRVQQPSIDGTQTFQQYWAIRQTHRTSGTVTTGTFFNAWAAAGMPIGQHNYMIVATEAYNSAGRASVVVETPP.

An N-terminal signal peptide occupies residues 1 to 19 (MVSFSTLLTACTAITGALG). The region spanning 28-218 (NVTPNAQGTH…SAGRASVVVE (191 aa)) is the GH11 domain. A glycan (N-linked (GlcNAc...) asparagine) is linked at Asn-96. Residue Glu-114 is the Nucleophile of the active site. Glu-205 acts as the Proton donor in catalysis.

Belongs to the glycosyl hydrolase 11 (cellulase G) family.

The catalysed reaction is Endohydrolysis of (1-&gt;4)-beta-D-xylosidic linkages in xylans.. It participates in glycan degradation; xylan degradation. Endo-1,4-beta-xylanase involved in the hydrolysis of xylan, a major structural heterogeneous polysaccharide found in plant biomass representing the second most abundant polysaccharide in the biosphere, after cellulose. May act as an elicitor of plant defense responses in certain plants but does not exhibit any cell death when transiently expressed in N.benthamiana. In Verticillium dahliae (strain VdLs.17 / ATCC MYA-4575 / FGSC 10137) (Verticillium wilt), this protein is Ethylene-inducing xylanase 4.